Reading from the N-terminus, the 165-residue chain is P2Y purinoceptor 4 (165 aa).

The helical transmembrane segment at serine 1–tyrosine 16 threads the bilayer. The Extracellular segment spans residues alanine 17–lysine 30. Residues phenylalanine 31–serine 51 traverse the membrane as a helical segment. Residues valine 52–serine 74 lie on the Cytoplasmic side of the membrane. A helical membrane pass occupies residues leucine 75–valine 95. Residues threonine 96–alanine 124 lie on the Extracellular side of the membrane. Asparagine 100 carries an N-linked (GlcNAc...) asparagine glycan. The helical transmembrane segment at valine 125 to alanine 145 threads the bilayer. The Cytoplasmic segment spans residues arginine 146–leucine 165.

Belongs to the G-protein coupled receptor 1 family.

It is found in the cell membrane. Receptor for UTP and UDP coupled to G-proteins that activate a phosphatidylinositol-calcium second messenger system. The sequence is that of P2Y purinoceptor 4 (P2RY4) from Cricetulus griseus (Chinese hamster).